Here is a 136-residue protein sequence, read N- to C-terminus: Large ribosomal subunit protein bL21 (136 aa).

Residues 107-136 (RAAADRKTAPKRASAKAAADQTTAAQATAE) form a disordered region. The span at 121-136 (AKAAADQTTAAQATAE) shows a compositional bias: low complexity.

This sequence belongs to the bacterial ribosomal protein bL21 family. In terms of assembly, part of the 50S ribosomal subunit. Contacts protein L20.

In terms of biological role, this protein binds to 23S rRNA in the presence of protein L20. The chain is Large ribosomal subunit protein bL21 from Acidothermus cellulolyticus (strain ATCC 43068 / DSM 8971 / 11B).